The primary structure comprises 81 residues: ATP synthase subunit c (81 aa).

2 helical membrane-spanning segments follow: residues 5–25 (IAAG…IGAG) and 57–77 (VGLV…FVFA).

Belongs to the ATPase C chain family. F-type ATPases have 2 components, F(1) - the catalytic core - and F(0) - the membrane proton channel. F(1) has five subunits: alpha(3), beta(3), gamma(1), delta(1), epsilon(1). F(0) has three main subunits: a(1), b(2) and c(10-14). The alpha and beta chains form an alternating ring which encloses part of the gamma chain. F(1) is attached to F(0) by a central stalk formed by the gamma and epsilon chains, while a peripheral stalk is formed by the delta and b chains.

Its subcellular location is the cell membrane. Its function is as follows. F(1)F(0) ATP synthase produces ATP from ADP in the presence of a proton or sodium gradient. F-type ATPases consist of two structural domains, F(1) containing the extramembraneous catalytic core and F(0) containing the membrane proton channel, linked together by a central stalk and a peripheral stalk. During catalysis, ATP synthesis in the catalytic domain of F(1) is coupled via a rotary mechanism of the central stalk subunits to proton translocation. In terms of biological role, key component of the F(0) channel; it plays a direct role in translocation across the membrane. A homomeric c-ring of between 10-14 subunits forms the central stalk rotor element with the F(1) delta and epsilon subunits. The polypeptide is ATP synthase subunit c (Mycobacterium bovis (strain ATCC BAA-935 / AF2122/97)).